Consider the following 649-residue polypeptide: Protein phosphatase Slingshot homolog 3 (649 aa).

Over residues 1–20 (MALVTVSRSPPASGHSTPVG) the composition is skewed to polar residues. Positions 1–32 (MALVTVSRSPPASGHSTPVGPTQDRVVRRRGR) are disordered. A2 carries the N-acetylalanine modification. S9 and S38 each carry phosphoserine. Residues 49–90 (LQDGGDSNVASEADSEPMEEPSGEEQPTEDQTDKGQGLQSPW) form a disordered region. The span at 61–78 (ADSEPMEEPSGEEQPTED) shows a compositional bias: acidic residues. The residue at position 88 (S88) is a Phosphoserine. The DEK-C domain occupies 266–321 (EKMEQAILAELWQVLDTSDLDSVTSKEIRQALELRLGCPLQQYRDFIDNQMLLLMA). In terms of domain architecture, Tyrosine-protein phosphatase spans 325–466 (RASRIFPHLY…LRTYQGILTA (142 aa)). Residue C410 is the Phosphocysteine intermediate of the active site. 2 stretches are compositionally biased toward low complexity: residues 541 to 551 (LEPSESESTPE) and 608 to 627 (TRAF…GMSS). Disordered stretches follow at residues 541–586 (LEPS…KGPW) and 608–649 (TRAF…EDKA). Residues 639–649 (SVDDSREEDKA) are compositionally biased toward basic and acidic residues.

The protein belongs to the protein-tyrosine phosphatase family. As to quaternary structure, does not bind to, or colocalize with, filamentous actin. In terms of tissue distribution, expressed in brain, small intestine and testis. Also expressed at lower levels in heart, kidney, liver, spleen and thymus.

It localises to the cytoplasm. The protein resides in the cytoskeleton. The protein localises to the nucleus. The enzyme catalyses O-phospho-L-tyrosyl-[protein] + H2O = L-tyrosyl-[protein] + phosphate. The catalysed reaction is O-phospho-L-seryl-[protein] + H2O = L-seryl-[protein] + phosphate. It carries out the reaction O-phospho-L-threonyl-[protein] + H2O = L-threonyl-[protein] + phosphate. In terms of biological role, protein phosphatase which may play a role in the regulation of actin filament dynamics. Can dephosphorylate and activate the actin binding/depolymerizing factor cofilin, which subsequently binds to actin filaments and stimulates their disassembly. The polypeptide is Protein phosphatase Slingshot homolog 3 (Ssh3) (Mus musculus (Mouse)).